The sequence spans 239 residues: UDP-2,3-diacylglucosamine hydrolase (239 aa).

Mn(2+) is bound by residues D8, H10, D41, N78, and H113. Residue 78-79 (NR) participates in substrate binding. Positions 121, 159, 163, 166, and 194 each coordinate substrate. 2 residues coordinate Mn(2+): H194 and H196.

Belongs to the LpxH family. It depends on Mn(2+) as a cofactor.

It localises to the cell inner membrane. It catalyses the reaction UDP-2-N,3-O-bis[(3R)-3-hydroxytetradecanoyl]-alpha-D-glucosamine + H2O = 2-N,3-O-bis[(3R)-3-hydroxytetradecanoyl]-alpha-D-glucosaminyl 1-phosphate + UMP + 2 H(+). The protein operates within glycolipid biosynthesis; lipid IV(A) biosynthesis; lipid IV(A) from (3R)-3-hydroxytetradecanoyl-[acyl-carrier-protein] and UDP-N-acetyl-alpha-D-glucosamine: step 4/6. In terms of biological role, hydrolyzes the pyrophosphate bond of UDP-2,3-diacylglucosamine to yield 2,3-diacylglucosamine 1-phosphate (lipid X) and UMP by catalyzing the attack of water at the alpha-P atom. Involved in the biosynthesis of lipid A, a phosphorylated glycolipid that anchors the lipopolysaccharide to the outer membrane of the cell. The chain is UDP-2,3-diacylglucosamine hydrolase from Shewanella sp. (strain ANA-3).